The sequence spans 241 residues: PRA1 family protein H (241 aa).

3 consecutive transmembrane segments (helical) span residues 142-162, 189-205, and 209-228; these read LFIV…VGLL, LSIG…LTFL, and MALF…HAGF.

The protein belongs to the PRA1 family.

It is found in the endoplasmic reticulum membrane. In terms of biological role, may be involved in both secretory and endocytic intracellular trafficking in the endosomal/prevacuolar compartments. This Arabidopsis thaliana (Mouse-ear cress) protein is PRA1 family protein H (PRA1H).